The sequence spans 138 residues: Nucleoside diphosphate kinase (138 aa).

The ATP site is built by lysine 11, phenylalanine 59, arginine 87, threonine 93, arginine 104, and asparagine 114. Histidine 117 (pros-phosphohistidine intermediate) is an active-site residue.

Belongs to the NDK family. Mg(2+) is required as a cofactor.

It is found in the cytoplasm. The enzyme catalyses a 2'-deoxyribonucleoside 5'-diphosphate + ATP = a 2'-deoxyribonucleoside 5'-triphosphate + ADP. The catalysed reaction is a ribonucleoside 5'-diphosphate + ATP = a ribonucleoside 5'-triphosphate + ADP. Its function is as follows. Major role in the synthesis of nucleoside triphosphates other than ATP. The ATP gamma phosphate is transferred to the NDP beta phosphate via a ping-pong mechanism, using a phosphorylated active-site intermediate. The protein is Nucleoside diphosphate kinase of Saccharolobus solfataricus (strain ATCC 35092 / DSM 1617 / JCM 11322 / P2) (Sulfolobus solfataricus).